The following is a 2367-amino-acid chain: MGWTCPVQGCMYSRSTWSNRGLKEDGLSSTMRCPGAMCGAMLVRSEPVQAPKATVVPQTPVTAVRPKRTVVSATPLRKQDCVVVVEVGFPALLSLEYPALAGRARHTGEFDSALLARKPSNGGTARAPTGWFKPRVVRTQPAKKALPSWVSEARRLIKGALEGSNAFGPRYCREKFPKARLVWVLGMLSKSSPPSVAIGRQLKKSFLALQARIARALAKKQSARAARRQEACRKIRLALQQARGIAALERQQARQLSGAGLYSVRLCTKRALSPIVEVPKRHKKKAISLPSPVSVQEFPEGLVGPNFWETSGLLNCVASPQRREDLVFPVYGIDSCRTDPEYFVVGPKSPSKIMGDTKPRLPTCPAEALNLLWASNLFEDWELDIIGQMVSDGLLTSQAFLDGCTLVSYYGQEQMVDSFHCLLQDPVPAEVAEALAVDVQALDFDAVFGCGISDFLRGTRDAMKGWIMDPVIAKSTTWCNTIIDKVRALFDQYFAPFHKIIDGMSYVNSLWAKCKEWAQSVLKNGSQLFSVMWETHCVSFVIIITCACTLLVENVLKELRLISRVGTLTSCVISGALGILGCGYILAKCEDLAVVSASIRAFLGVLLCPPTMEAVDLNQSLIPEEIQATSWTGVDRVLGALNAVGSGLTGFNTDTIIYWGRFAQSFDGMRRGKDAVCALAACLFEKLGTVYNRVTGKEAAFFHELSSLVSIDVQGWLNSSRRVMAESIAFAKSDAVAFATVERLINDGETIQLTAASAPKSHSMQFGQILAERLRELRTLRNDMAHAGSFEGRRCVPFWLYIYGPPGVGKTTTMHEFSQALLTAFEFPSDSLTSKSATDKYWSLYRRQALVQIDDLGAISESGMEQEMMNIVSSATYNPTMAVANEKTTLFDSKFIVSTSNNYSAGTDAKIHDRKAFNRRRRVVIKTRGKAGVAFNPHDSTAAAEFCVVERDDRAETPIWVQSGEAPDDKELYWMDFRTTVAYVIEQARIHHNAEDIEQAQYSMKHSRTRQLYQVCENYIGEVKMSVANFVPGDMLGAWNLEPKGRFFYSCVDGRVYSYDPEQKAHDEGPVDKALDFEQICLEKLSYTLQADIQGGPKSATAGIFLRSMVSGECAVESVDKLNRSASREHLIFFKNLSLADRVYLRLVQKRILQLAMVGDPLGLRSYTVMMEGFQNSYNYVKENGGRLLLILCSCMLLGIACYTFFNALAILIGGTSVAAGAAAMVDIGACGSTSTYASEYGAKMGRRNMPHRSREIPAVWSEETGHDEKWQLCGLLETCRSDMPAVHVNLVPGNKFAITKHQAQAIPDGSSVGLSVAGRSFRTFQWRASALTEYAESEICTYFDSRIPSLGKQAMKMYSDSDLDALNVKYFSTRTLHFRLVDDQVEKRHWDADACVISTPKTIVSTINGVIYRQEIPTAITYRRESVKHDCGALVFTEVRGKPKAVGMLVGTLGGTTYVCKFPHIEVDAFACVPDIRGFNLEAGVSTLGYSKLGWLDRRHQPHNSEKTEFVPIPEKYHMDDVPCKIPAVLSAKDPRLADIPQCMGYDPYKQGMEKFAHPMQEIDEQLLATVCDEIAQEFHDVGVRGRMVSMDEAINGHHKYEIPSFYVEGASTRELNELRTSCSAEVWCCDPRSDIEFEYPRIIPGPVESKWKCESTCCGCTFKSGGTEAIISFVKARSPCCEEIFFDGLDLTTSEGYPLFLDRPAGAKGKERFFEGSENQKFLIPDCPLDVQLKKGIEETHLGTPQLIIKESAKDELLKEGKVLPSEGMPGTRLFSICPAWYNIVVRQHFVYIAESVRKRRRTLSSQVGIVVGSREWDDLAARLRSKKNDKMYCCDYSKFDGLMTPQIVHAITNIYERMFSGNDGMSQFRQNLLMGICNRISICGSQVYRVEAGMPSGFALTVDFNSIFNEILVRCAYRSLVPEIERPFFSNNVVLIVYGDDNVLGIHPNIESAFNGNAIKAYMKEELGIKITDGADKLSPVICARPLEQCEFLKRTWRKDRQYGLYRAPLVETSIYSCLRYVRLQNYDWQAPLLQNVQGSLYEASLHGPDMHARIYKHFATHFPKWVEEHELYTYEQCRTRFIAAKNGDFNFHPASAQMGHVFSQQTEIQELSQSQNPKRCFQLHPKIHICGPGHNEQDCFYVDVRVKGKITKGKGFHHAPVFSAGSGQLGTVKWASSFRSSSACPMRDLAVDAFKRGECVYFRDNGELINAWLAAINFGMSINADGLDGLLQVYRNQGPTHLDDLSFYFEGGVVGVPAPAHLMVYGTDTSILNRLCPKTVLESAPPPGRSSNVSERSQVQTFLHMSPKPCFITLKGSGKVCHGLRCNNSCRGHISCTDVVRNSAANQRAAMLDVLRRGCYNIQ.

The Cytoplasmic segment spans residues 587 to 1194 (AKCEDLAVVS…GGRLLLILCS (608 aa)). The 165-residue stretch at 776–940 (ELRTLRNDMA…AGVAFNPHDS (165 aa)) folds into the SF3 helicase domain. Residue 804–811 (GPPGVGKT) participates in ATP binding. A helical membrane pass occupies residues 1195-1215 (CMLLGIACYTFFNALAILIGG). The Lumenal portion of the chain corresponds to 1216 to 1235 (TSVAAGAAAMVDIGACGSTS). The 211-residue stretch at 1258 to 1468 (PAVWSEETGH…YVCKFPHIEV (211 aa)) folds into the Peptidase C3 domain. Catalysis depends on for picornain 3C-like protease activity residues His-1302, Glu-1339, and Cys-1432. Residues 1832–1957 (DKMYCCDYSK…GIHPNIESAF (126 aa)) form the RdRp catalytic domain.

Belongs to the nepoviruses RNA1 polyprotein family. Post-translationally, specific enzymatic cleavages by picornain 3C-like protease in vivo yield mature proteins. Picornain 3C-like protease is autocatalytically processed. In terms of processing, VPg is uridylylated by the polymerase and is covalently linked to the 5'-end of genomic RNA. This uridylylated form acts as a nucleotide-peptide primer for the polymerase.

The protein resides in the host endoplasmic reticulum lumen. The protein localises to the host endoplasmic reticulum membrane. The enzyme catalyses RNA(n) + a ribonucleoside 5'-triphosphate = RNA(n+1) + diphosphate. Its function is as follows. Picornain 3C-like protease is a thiol protease that cleaves the P1 and P2 polyproteins. The sequence is that of RNA1 polyprotein from Fragaria vesca (Woodland strawberry).